Here is a 2476-residue protein sequence, read N- to C-terminus: Zonadhesin (2476 aa).

A signal peptide spans 1–29; the sequence is MLGLPALAGPMAMPHPPLIPSTPTLLAFS. The Extracellular segment spans residues 30–2418; it reads FPGGFYMLLD…SPKKPEASNR (2389 aa). MAM domains lie at 31 to 144 and 147 to 312; these read PGGF…PCEE and PQCD…TCRG. N-linked (GlcNAc...) asparagine glycosylation is found at Asn-109 and Asn-269. Disordered regions lie at residues 313–332, 358–462, and 537–632; these read PSET…KPTV, PTVP…TERT, and ERTT…RTTI. The segment at 319–687 is 53 X approximate heptapeptide repeats (mucin-like domain); that stretch reads STEKPVAPTE…ATTVTPRTTI (369 aa). Over residues 358-373 the composition is skewed to low complexity; it reads PTVPTEKPTIPTEKST. Over residues 400–412 the composition is skewed to pro residues; the sequence is TTPPEGPAVPPKG. Basic and acidic residues predominate over residues 423–433; the sequence is HTEKSTVHTEK. Residues 451–462 are compositionally biased toward low complexity; that stretch reads PTKRTTTPTERT. The region spanning 690 to 739 is the TIL 1 domain; that stretch reads CPPNAHFERCACPVSCQSPTPNCELFCKPGCVCDPGFLFSGSHCVNASSC. Asn-735, Asn-758, and Asn-833 each carry an N-linked (GlcNAc...) asparagine glycan. One can recognise a VWFC 1 domain in the interval 740–794; it reads DCFYNDNYYKLGTDWFSPNCTEHCHCRPSSRMECQTFKCGTHTVCQLKNGQYGCH. Residues 799–976 enclose the VWFD 1 domain; sequence ATCSVYGDPH…TSEDADQQCE (178 aa). Intrachain disulfides connect Cys-801–Cys-936 and Cys-823–Cys-975. Positions 943–983 are disordered; it reads SSNDNQKPDGSPAKDEKELGSSWQTSEDADQQCEENQVSPP. The TIL 2 domain occupies 1070–1123; that stretch reads CPRNSRYTLCARLCPDTCHSEFSGRACKDRCVEGCECDPGFVLSGLQCVSRSEC. The 57-residue stretch at 1124–1180 folds into the VWFC 2 domain; sequence GCLDSTAGYVKVGERWFKPGCRQLCICEGNNRTRCVLWRCQAQEFCGQQDGIYGCHA. A glycan (N-linked (GlcNAc...) asparagine) is linked at Asn-1154. A VWFD 2 domain is found at 1184–1364; sequence ATCTVSGDPH…INELSEPGCF (181 aa). Intrachain disulfides connect Cys-1186–Cys-1324 and Cys-1208–Cys-1363. 2 N-linked (GlcNAc...) asparagine glycosylation sites follow: Asn-1329 and Asn-1448. In terms of domain architecture, TIL 3 spans 1456-1511; it reads CPSGSSYSTCANPCPATCLSLNNPSYCPSTLPCAEGCECQKGHILSGTSCVPLSQC. A VWFC 3 domain is found at 1512 to 1568; it reads GCTTQRGSYHPVGESWYTDNSCSRLCTCSAHNNISCRQASCKPSQMCWPQDGLIRCR. Asn-1544, Asn-1596, and Asn-1654 each carry an N-linked (GlcNAc...) asparagine glycan. One can recognise a VWFD 3 domain in the interval 1573–1751; sequence GVCRIPDTSH…RDKEIDPNCQ (179 aa). 2 disulfide bridges follow: Cys-1575/Cys-1712 and Cys-1597/Cys-1750. A compositionally biased stretch (basic and acidic residues) spans 1747–1759; sequence DPNCQEDDRKTEA. Positions 1747–1768 are disordered; sequence DPNCQEDDRKTEAESQEQPSAN. The N-linked (GlcNAc...) asparagine glycan is linked to Asn-1843. One can recognise a TIL 4 domain in the interval 1851 to 1907; that stretch reads CSAHSVYTSCVPSCLPSCQDPEGQCTGAGAPSTCEEGCICEPGYVLSEQQCVARSQC. In terms of domain architecture, VWFC 4 spans 1908 to 1963; sequence GCRDARGTFLPVGRFRLSSGCSQMCVCTAGAIECRPFTCPSGSQCEPNEDGKDFCQ. Asn-1965 carries N-linked (GlcNAc...) asparagine glycosylation. The region spanning 1968-2145 is the VWFD 4 domain; the sequence is NLCSVFGDPH…WEVKAKEGHP (178 aa). Cys-1970 and Cys-2107 form a disulfide bridge. Residues Asn-2122, Asn-2165, and Asn-2178 are each glycosylated (N-linked (GlcNAc...) asparagine). Residues 2257-2310 form the TIL 5 domain; sequence CPANTVYQSCMTPCPASCATLAVPRACDGPCVEGCASLPGYIYSGAQSLPMAHC. Positions 2311–2365 constitute a VWFC 5 domain; sequence GCTNNGVYYQQGDSFVTENCSQRCTCASSGVLLCEPLSCRPGEICTLGNLTRGCF. Residues Asn-2329 and Asn-2359 are each glycosylated (N-linked (GlcNAc...) asparagine). An EGF-like domain is found at 2366-2402; the sequence is RDSPCLQNPCQNDGRCREQGTHFTCECELGYGGDLCT. 3 cysteine pairs are disulfide-bonded: Cys-2370–Cys-2381, Cys-2375–Cys-2390, and Cys-2392–Cys-2401. The helical transmembrane segment at 2419-2439 threads the bilayer; the sequence is VAILLGMLMPTVLLVPAVTRV. A disordered region spans residues 2438–2476; that stretch reads RVSRKRRRRRRPSRERTQSQNRGKRAGTDCAPEQAYKVA. Positions 2439–2450 are enriched in basic residues; sequence VSRKRRRRRRPS. Residues 2440–2476 lie on the Cytoplasmic side of the membrane; the sequence is SRKRRRRRRPSRERTQSQNRGKRAGTDCAPEQAYKVA.

Probably forms covalent oligomers. Post-translationally, the MAM domains and the mucin-like domains are missing from the zonadhesin that binds to the egg extracellular matrix. Processing might occur during sperm maturation and/or capacitation. In testis, primarily in haploid spermatids. Not in lung, liver, heart, spleen, brain, kidney, epididymis.

It localises to the cell membrane. Its function is as follows. Binds in a species-specific manner to the zona pellucida of the egg. May be involved in gamete recognition and/or signaling. The protein is Zonadhesin (ZAN) of Sus scrofa (Pig).